The following is a 264-amino-acid chain: Acyl-[acyl-carrier-protein]--UDP-N-acetylglucosamine O-acyltransferase (264 aa).

The protein belongs to the transferase hexapeptide repeat family. LpxA subfamily. As to quaternary structure, homotrimer.

The protein resides in the cytoplasm. It catalyses the reaction a (3R)-hydroxyacyl-[ACP] + UDP-N-acetyl-alpha-D-glucosamine = a UDP-3-O-[(3R)-3-hydroxyacyl]-N-acetyl-alpha-D-glucosamine + holo-[ACP]. The protein operates within glycolipid biosynthesis; lipid IV(A) biosynthesis; lipid IV(A) from (3R)-3-hydroxytetradecanoyl-[acyl-carrier-protein] and UDP-N-acetyl-alpha-D-glucosamine: step 1/6. Involved in the biosynthesis of lipid A, a phosphorylated glycolipid that anchors the lipopolysaccharide to the outer membrane of the cell. This is Acyl-[acyl-carrier-protein]--UDP-N-acetylglucosamine O-acyltransferase from Rickettsia felis (strain ATCC VR-1525 / URRWXCal2) (Rickettsia azadi).